A 763-amino-acid chain; its full sequence is Phosphoglycerol transferase I (763 aa).

4 consecutive transmembrane segments (helical) span residues 1-21 (MSELLSFALFLASVLIYAWKA), 26-46 (WWFAATLTVLGLFVVLNITLF), 77-97 (ILPGIGIVLGLTAVFGALGWI), and 108-128 (FGYSLLALLLALGSVDASPAF).

This sequence belongs to the OpgB family.

Its subcellular location is the cell inner membrane. It catalyses the reaction a phosphatidylglycerol + a membrane-derived-oligosaccharide D-glucose = a 1,2-diacyl-sn-glycerol + a membrane-derived-oligosaccharide 6-(glycerophospho)-D-glucose.. It functions in the pathway glycan metabolism; osmoregulated periplasmic glucan (OPG) biosynthesis. Transfers a phosphoglycerol residue from phosphatidylglycerol to the membrane-bound nascent glucan backbones. This Escherichia coli (strain ATCC 8739 / DSM 1576 / NBRC 3972 / NCIMB 8545 / WDCM 00012 / Crooks) protein is Phosphoglycerol transferase I.